The chain runs to 439 residues: Sodium-dependent phosphate transport protein 3 (439 aa).

N-linked (GlcNAc...) asparagine glycosylation is found at Asn-47, Asn-56, Asn-68, and Asn-69. Helical transmembrane passes span 98-118 (INYG…IFGA), 130-150 (SLLT…VIMV), 183-203 (TIAG…GGLI), 211-231 (FIFY…FTVI), 273-293 (LPLW…TIIL), 317-337 (LPFI…DFLL), 350-369 (LFSS…LPFV), 374-396 (VITI…GFII), and 415-435 (GFGL…ISQV).

This sequence belongs to the major facilitator superfamily. Sodium/anion cotransporter family. Expressed in the small intestine, kidney, spleen and testis. Not detected in fetal brain, bone marrow, and mammary gland.

The protein localises to the apical cell membrane. The catalysed reaction is 3 Na(+)(out) + phosphate(out) = 3 Na(+)(in) + phosphate(in). It catalyses the reaction urate(out) + n chloride(in) = urate(in) + n chloride(out). Acts as a membrane potential-dependent organic anion transporter, the transport requires a low concentration of chloride ions. Mediates chloride-dependent transport of urate. Can actively transport inorganic phosphate into cells via Na(+) cotransport. This is Sodium-dependent phosphate transport protein 3 (SLC17A2) from Homo sapiens (Human).